The primary structure comprises 1112 residues: Phytochrome E (1112 aa).

The interval 1–20 is disordered; sequence MGFESSSSAASNMKPQPQKS. One can recognise a GAF domain in the interval 217–387; sequence DIGALCDTVV…AFGLQLQMEL (171 aa). Residue Cys322 participates in phytochromobilin binding. PAS domains follow at residues 595 to 666 and 732 to 803; these read FVCE…LQGE and DYKT…LISL. One can recognise a Histidine kinase domain in the interval 877–1096; it reads YVRQEIKNPL…FFQVDLQVKT (220 aa).

This sequence belongs to the phytochrome family. In terms of assembly, homodimer. In terms of processing, contains one covalently linked phytochromobilin chromophore.

Regulatory photoreceptor which exists in two forms that are reversibly interconvertible by light: the Pr form that absorbs maximally in the red region of the spectrum and the Pfr form that absorbs maximally in the far-red region. Photoconversion of Pr to Pfr induces an array of morphogenic responses, whereas reconversion of Pfr to Pr cancels the induction of those responses. Pfr controls the expression of a number of nuclear genes including those encoding the small subunit of ribulose-bisphosphate carboxylase, chlorophyll A/B binding protein, protochlorophyllide reductase, rRNA, etc. It also controls the expression of its own gene(s) in a negative feedback fashion. The protein is Phytochrome E (PHYE) of Arabidopsis thaliana (Mouse-ear cress).